A 179-amino-acid chain; its full sequence is ATP synthase subunit delta (179 aa).

This sequence belongs to the ATPase delta chain family. As to quaternary structure, F-type ATPases have 2 components, F(1) - the catalytic core - and F(0) - the membrane proton channel. F(1) has five subunits: alpha(3), beta(3), gamma(1), delta(1), epsilon(1). F(0) has three main subunits: a(1), b(2) and c(10-14). The alpha and beta chains form an alternating ring which encloses part of the gamma chain. F(1) is attached to F(0) by a central stalk formed by the gamma and epsilon chains, while a peripheral stalk is formed by the delta and b chains.

The protein resides in the cell membrane. In terms of biological role, f(1)F(0) ATP synthase produces ATP from ADP in the presence of a proton or sodium gradient. F-type ATPases consist of two structural domains, F(1) containing the extramembraneous catalytic core and F(0) containing the membrane proton channel, linked together by a central stalk and a peripheral stalk. During catalysis, ATP synthesis in the catalytic domain of F(1) is coupled via a rotary mechanism of the central stalk subunits to proton translocation. This protein is part of the stalk that links CF(0) to CF(1). It either transmits conformational changes from CF(0) to CF(1) or is implicated in proton conduction. The protein is ATP synthase subunit delta of Clostridium acetobutylicum (strain ATCC 824 / DSM 792 / JCM 1419 / IAM 19013 / LMG 5710 / NBRC 13948 / NRRL B-527 / VKM B-1787 / 2291 / W).